The chain runs to 832 residues: MAGLGSPLGRLTAVTSEIYDFAAIQARWLPVWTELDPFRASDDPSDPRERRYMLDMFPYPSGDLHMGHAEAFAIGDVVARYWFQRGYNVLHPIGWDAFGLPAENAAIQRNLHPADWTYRNIETQAASFRNYAISFDWSRRLHTCDPEYYKWTQWLFLRLFERGLAYRKASPVNWCPNDQTVLANEQVVGGTCERCGAQVTKKTLTQWYFRITEYAQRLLDDMALLEGRWPERVLTMQRNWIGRSEGAYVDFTIEGRAEPVTVFTTRPDTLYGATFFVIAADSPLAAEICAPEQRAAFEAYVDQVRRLSDIDRLSTERQKTGVFLGRYAVNPVNGERIPVWAADYVLADYGTGAIMAVPAHDQRDLDFALTYGLPVRVVVDTGEGDPAVTGVATEGDGVHINSGLIDGTDKAEGIARITRYLEDIGKGRAGVTYRLRDWLVSRQRFWGAPIPIVHCPGCGEVAVPDQDLPVLLPDLRGADLAPKGISPLAGAADWVQTTCPRCGGSAQRDTDTMDTFVDSSWYYLRYCSPHDPSQPFDVAKVRQWLPVHQYVGGVEHAILHLLYSRFITKVLHDMGLVDFVEPFSALLNQGQVINQGKAMSKSLGNGVDLGEQLATYGVDAVRLTMVFAGPPEEDIDWADMNPGALGKFLARVWRIAGEVTSPVGAPPKDGDPALRRVTHRTIREVTELVESFRFNVAVARVMELANALRKAIDTGPGPADPAVREGAEALAVMLSLFAPYTAEECWARLGHQPTVAKAGWPTPDPELLAQEEVTCVVQVNGKVRERLRVSPSISEEELRAAALAAPAVEKAIDGRPVQRIIVRAPKLVNVVV.

Positions 58 to 68 match the 'HIGH' region motif; sequence PYPSGDLHMGH. Residues 598 to 602 carry the 'KMSKS' region motif; the sequence is AMSKS. Lys601 serves as a coordination point for ATP.

Belongs to the class-I aminoacyl-tRNA synthetase family.

It is found in the cytoplasm. The enzyme catalyses tRNA(Leu) + L-leucine + ATP = L-leucyl-tRNA(Leu) + AMP + diphosphate. In Acidothermus cellulolyticus (strain ATCC 43068 / DSM 8971 / 11B), this protein is Leucine--tRNA ligase.